The following is a 309-amino-acid chain: Tagatose-6-phosphate kinase (309 aa).

The protein belongs to the carbohydrate kinase PfkB family. LacC subfamily.

The catalysed reaction is D-tagatofuranose 6-phosphate + ATP = D-tagatofuranose 1,6-bisphosphate + ADP + H(+). It functions in the pathway carbohydrate metabolism; D-tagatose 6-phosphate degradation; D-glyceraldehyde 3-phosphate and glycerone phosphate from D-tagatose 6-phosphate: step 1/2. This Streptococcus pyogenes serotype M1 protein is Tagatose-6-phosphate kinase.